The chain runs to 231 residues: Somatolactin (231 aa).

The N-terminal stretch at 1–24 (MNMMTVKQQGVWAALLWPYLLTAS) is a signal peptide. 3 disulfide bridges follow: Cys29–Cys39, Cys89–Cys205, and Cys222–Cys230. Asn145 is a glycosylation site (N-linked (GlcNAc...) asparagine).

Belongs to the somatotropin/prolactin family. As to expression, pituitary gland.

The protein localises to the secreted. The polypeptide is Somatolactin (Paralichthys olivaceus (Bastard halibut)).